The following is a 252-amino-acid chain: Neurexophilin-3 (252 aa).

The first 22 residues, 1 to 22 (MQLTRCCFVFLVQGSLYLVICG), serve as a signal peptide directing secretion. An II region spans residues 23–75 (QDDGPPGSEDPERDDHEGQPRPRVPRKRGHISPKSRPMANSTLLGLLAPPGEA). Positions 27-58 (PPGSEDPERDDHEGQPRPRVPRKRGHISPKSR) are disordered. Residues 45–55 (RVPRKRGHISP) are compositionally biased toward basic residues. Asparagine 62, asparagine 127, asparagine 137, and asparagine 143 each carry an N-linked (GlcNAc...) asparagine glycan. The tract at residues 76–157 (WGILGQPPNR…LVPPSKAVEF (82 aa)) is III. An IV (linker domain) region spans residues 158–166 (HQEQQIFIE). The v (Cys-rich) stretch occupies residues 167–252 (AKASKIFNCR…HSDTPYYPSG (86 aa)).

The protein belongs to the neurexophilin family. Post-translationally, may be proteolytically processed at the boundary between the N-terminal non-conserved and the central conserved domain in neuron-like cells. In terms of tissue distribution, highest level in brain.

The protein resides in the secreted. Its function is as follows. May be signaling molecules that resemble neuropeptides. Ligand for alpha-neurexins. The chain is Neurexophilin-3 (NXPH3) from Homo sapiens (Human).